A 545-amino-acid chain; its full sequence is Sulfite oxidase, mitochondrial (545 aa).

The transit peptide at 1-79 (MLLLHRAVVL…YQDHRCRAAQ (79 aa)) directs the protein to the mitochondrion. The 80-residue stretch at 82-161 (THIYTKEEVS…LAQYKIGELN (80 aa)) folds into the Cytochrome b5 heme-binding domain. Heme b is bound at residue histidine 118. A Phosphoserine modification is found at serine 123. 3 residues coordinate heme b: histidine 143, glutamine 145, and histidine 147. Positions 165–174 (KVAPTVETSD) are hinge. The segment at 175-401 (PYADDPVRHP…YSHWQRRDYK (227 aa)) is moco domain. Residues 215 to 219 (FTRNH), cysteine 264, aspartate 322, histidine 361, arginine 366, and 377 to 379 (HVK) each bind Mo-molybdopterin. The segment at 402–538 (GFSPSVDWET…RGVLSNAWHR (137 aa)) is homodimerization.

As to quaternary structure, homodimer. The cofactor is heme b. Mo-molybdopterin serves as cofactor.

It localises to the mitochondrion intermembrane space. The catalysed reaction is sulfite + O2 + H2O = sulfate + H2O2. Its pathway is energy metabolism; sulfur metabolism. In terms of biological role, catalyzes the oxidation of sulfite to sulfate, the terminal reaction in the oxidative degradation of sulfur-containing amino acids. This is Sulfite oxidase, mitochondrial (SUOX) from Homo sapiens (Human).